A 372-amino-acid polypeptide reads, in one-letter code: Queuine tRNA-ribosyltransferase (372 aa).

D92 (proton acceptor) is an active-site residue. Residues 92–96 (DSGGF), D146, Q188, and G215 each bind substrate. Residues 246–252 (GIGTLRE) form an RNA binding region. The active-site Nucleophile is the D265. Residues 270–274 (TRLGR) are RNA binding; important for wobble base 34 recognition. Zn(2+)-binding residues include C303, C305, C308, and H334.

The protein belongs to the queuine tRNA-ribosyltransferase family. As to quaternary structure, homodimer. Within each dimer, one monomer is responsible for RNA recognition and catalysis, while the other monomer binds to the replacement base PreQ1. Requires Zn(2+) as cofactor.

It catalyses the reaction 7-aminomethyl-7-carbaguanine + guanosine(34) in tRNA = 7-aminomethyl-7-carbaguanosine(34) in tRNA + guanine. The protein operates within tRNA modification; tRNA-queuosine biosynthesis. Functionally, catalyzes the base-exchange of a guanine (G) residue with the queuine precursor 7-aminomethyl-7-deazaguanine (PreQ1) at position 34 (anticodon wobble position) in tRNAs with GU(N) anticodons (tRNA-Asp, -Asn, -His and -Tyr). Catalysis occurs through a double-displacement mechanism. The nucleophile active site attacks the C1' of nucleotide 34 to detach the guanine base from the RNA, forming a covalent enzyme-RNA intermediate. The proton acceptor active site deprotonates the incoming PreQ1, allowing a nucleophilic attack on the C1' of the ribose to form the product. After dissociation, two additional enzymatic reactions on the tRNA convert PreQ1 to queuine (Q), resulting in the hypermodified nucleoside queuosine (7-(((4,5-cis-dihydroxy-2-cyclopenten-1-yl)amino)methyl)-7-deazaguanosine). The chain is Queuine tRNA-ribosyltransferase from Prochlorococcus marinus (strain MIT 9303).